Here is a 436-residue protein sequence, read N- to C-terminus: Gamma-glutamyl phosphate reductase (436 aa).

This sequence belongs to the gamma-glutamyl phosphate reductase family.

The protein localises to the cytoplasm. The enzyme catalyses L-glutamate 5-semialdehyde + phosphate + NADP(+) = L-glutamyl 5-phosphate + NADPH + H(+). The protein operates within amino-acid biosynthesis; L-proline biosynthesis; L-glutamate 5-semialdehyde from L-glutamate: step 2/2. Functionally, catalyzes the NADPH-dependent reduction of L-glutamate 5-phosphate into L-glutamate 5-semialdehyde and phosphate. The product spontaneously undergoes cyclization to form 1-pyrroline-5-carboxylate. In Prochlorococcus marinus subsp. pastoris (strain CCMP1986 / NIES-2087 / MED4), this protein is Gamma-glutamyl phosphate reductase.